We begin with the raw amino-acid sequence, 516 residues long: D-alanine--D-alanyl carrier protein ligase (516 aa).

Residue 156–157 (TS) participates in ATP binding. A D-alanine-binding site is contributed by D203. 298–303 (NAYGPT) serves as a coordination point for ATP. V307 provides a ligand contact to D-alanine. ATP-binding positions include D389, 401–404 (YGGR), and K503. K503 contributes to the D-alanine binding site.

The protein belongs to the ATP-dependent AMP-binding enzyme family. DltA subfamily.

The protein resides in the cytoplasm. The catalysed reaction is holo-[D-alanyl-carrier protein] + D-alanine + ATP = D-alanyl-[D-alanyl-carrier protein] + AMP + diphosphate. The protein operates within cell wall biogenesis; lipoteichoic acid biosynthesis. Its function is as follows. Catalyzes the first step in the D-alanylation of lipoteichoic acid (LTA), the activation of D-alanine and its transfer onto the D-alanyl carrier protein (Dcp) DltC. In an ATP-dependent two-step reaction, forms a high energy D-alanyl-AMP intermediate, followed by transfer of the D-alanyl residue as a thiol ester to the phosphopantheinyl prosthetic group of the Dcp. D-alanylation of LTA plays an important role in modulating the properties of the cell wall in Gram-positive bacteria, influencing the net charge of the cell wall. This chain is D-alanine--D-alanyl carrier protein ligase, found in Streptococcus pneumoniae (strain ATCC 700669 / Spain 23F-1).